The primary structure comprises 539 residues: Protein PNS1 (539 aa).

Positions 1–38 (MPLNEKYERPPQPPPAYDPNHRPPSSSENSAAANVNDG) are disordered. Topologically, residues 1–81 (MPLNEKYERP…NDNKPRWNDW (81 aa)) are cytoplasmic. Over residues 25–36 (SSSENSAAANVN) the composition is skewed to low complexity. The helical transmembrane segment at 82 to 102 (PFTIFFLCTVGGFIAIAAITL) threads the bilayer. Residues 103 to 129 (RAWSQTYSSTGSGIYDGVNTGTLNTNA) are Extracellular-facing. A helical membrane pass occupies residues 130-150 (AILLVFVCIIALVFSVLGLTL). Over 151 to 157 (CRIFPKQ) the chain is Cytoplasmic. A helical membrane pass occupies residues 158–178 (FIYCGMVINLVASLGTAIMYM). The Extracellular portion of the chain corresponds to 179-182 (SLRY). The chain crosses the membrane as a helical span at residues 183 to 203 (WSAGIVFLVFTFMTAWCYWGM). The Cytoplasmic segment spans residues 204 to 226 (RSRIPLSVAVLKVVVDAMKKCPQ). The chain crosses the membrane as a helical span at residues 227 to 247 (IFFVSFVGALVASAFGFLFSA). The Extracellular segment spans residues 248–274 (VIVATYIKYDPNSSNGGCDVSGGSCSH). The N-linked (GlcNAc...) asparagine glycan is linked to Asn259. Residues 275–295 (SKLIGVLVVVFFCGYYISEVI) form a helical membrane-spanning segment. The Cytoplasmic segment spans residues 296–332 (RNVIHCVISGVFGSWYYMSKSDQGMPRWPAFGALKRA). The helical transmembrane segment at 333 to 353 (MTYSFGSICFGSLLVALIDLL) threads the bilayer. Topologically, residues 354–371 (RQILQMIRHDVTSSGGGQ) are extracellular. The helical transmembrane segment at 372-392 (IAIQILFMVFDWIIGFLKWLA) threads the bilayer. The Cytoplasmic portion of the chain corresponds to 393 to 436 (EYFNHYAYSFIALYGKPYLRAAKETWYMLREKGMDALINDNLIN). The helical transmembrane segment at 437 to 457 (IALGLFSMFASYMTALFTFLY) threads the bilayer. At 458 to 473 (LRFTSPQYNSNGAYNG) the chain is on the extracellular side. Residues 474-494 (ALMAFSFVIALQICNIATEAI) traverse the membrane as a helical segment. Residues 495 to 539 (RSGTATFFVALGNDPEVFHHSYPHRFDEIFRAYPDVLRKLSHQNV) are Cytoplasmic-facing.

Belongs to the CTL (choline transporter-like) family.

It is found in the cell membrane. In terms of biological role, probably involved in transport through the plasma membrane. The sequence is that of Protein PNS1 (PNS1) from Saccharomyces cerevisiae (strain ATCC 204508 / S288c) (Baker's yeast).